We begin with the raw amino-acid sequence, 346 residues long: NADH-quinone oxidoreductase subunit H (346 aa).

8 helical membrane-spanning segments follow: residues 6–26 (ILFW…ACAY), 76–96 (VMYL…WSVV), 128–148 (ILFL…AGWA), 166–186 (ISYE…SGSL), 198–218 (LWNI…VAMF), 260–280 (ITMS…PFGI), 289–309 (LFGL…FLWV), and 324–344 (LGWK…SIYI).

This sequence belongs to the complex I subunit 1 family. In terms of assembly, NDH-1 is composed of 14 different subunits. Subunits NuoA, H, J, K, L, M, N constitute the membrane sector of the complex.

It localises to the cell inner membrane. It catalyses the reaction a quinone + NADH + 5 H(+)(in) = a quinol + NAD(+) + 4 H(+)(out). Its function is as follows. NDH-1 shuttles electrons from NADH, via FMN and iron-sulfur (Fe-S) centers, to quinones in the respiratory chain. The immediate electron acceptor for the enzyme in this species is believed to be ubiquinone. Couples the redox reaction to proton translocation (for every two electrons transferred, four hydrogen ions are translocated across the cytoplasmic membrane), and thus conserves the redox energy in a proton gradient. This subunit may bind ubiquinone. The protein is NADH-quinone oxidoreductase subunit H of Leptospira interrogans serogroup Icterohaemorrhagiae serovar copenhageni (strain Fiocruz L1-130).